A 343-amino-acid polypeptide reads, in one-letter code: DNA polymerase III subunit delta (343 aa).

3 domain regions span residues 1–140, 141–210, and 211–343; these read MIRL…VTCQ, TPEQ…NDAA, and HFTP…FIDG.

It belongs to the DNA polymerase HolA subunit family. The DNA polymerase III holoenzyme complex contains at least 10 different subunits organized into 3 functionally essential subassemblies: the Pol III core, the beta sliding clamp processivity factor and the clamp-loading complex. The Pol III core (subunits alpha, epsilon and theta) contains the polymerase and the 3'-5' exonuclease proofreading activities. The polymerase is tethered to the template via the dimeric beta sliding clamp processivity factor. The clamp-loading complex (also called gamma complex) assembles the beta sliding clamp onto the primed template and plays a central role in the organization and communication at the replication fork. The clamp-loading complex contains delta, delta', psi and chi, and 3 copies of either or both of two different DnaX proteins, gamma and tau. The DNA replisome complex has a single clamp loader (3 tau and 1 each of delta, delta', psi and chi subunits) which binds 3 Pol III cores (1 core on the leading strand and 2 on the lagging strand) each with a beta sliding clamp dimer. Additional proteins in the replisome are other copies of gamma, psi and chi, Ssb, DNA helicase and RNA primase. The clamp loader hydrolyzes ATP to assemble the beta processivity factor onto the primed template and plays a central role in the organization and communication at the replication fork; the minimal complex to load the beta sliding clamp on DNA is delta, delta', gamma.

It carries out the reaction DNA(n) + a 2'-deoxyribonucleoside 5'-triphosphate = DNA(n+1) + diphosphate. Part of the beta sliding clamp loading complex, which hydrolyzes ATP to load the beta clamp onto primed DNA to form the DNA replication pre-initiation complex. DNA polymerase III is a complex, multichain enzyme responsible for most of the replicative synthesis in bacteria. This DNA polymerase also exhibits 3'-5' exonuclease activity. The delta subunit is the wrench that will open the beta subunit dimer, which has been modeled to leave a gap large enough for ssDNA to pass through. The gamma complex (gamma(3),delta,delta') is thought to load beta dimers onto DNA by binding ATP which alters the complex's conformation so it can bind beta sliding clamp dimers and open them at one interface. Primed DNA is recognized, ATP is hydrolyzed releasing the gamma complex and closing the beta sliding clamp ring around the primed DNA. This is DNA polymerase III subunit delta (holA) from Escherichia coli (strain K12).